Consider the following 222-residue polypeptide: Probable elongation factor 1-beta (222 aa).

A disordered region spans residues 90–111 (KPAADDDDDVDLFGSDDEEDEE). Residues 94–111 (DDDDDVDLFGSDDEEDEE) are compositionally biased toward acidic residues. Residue serine 104 is modified to Phosphoserine.

It belongs to the EF-1-beta/EF-1-delta family. As to quaternary structure, EF-1 is composed of 4 subunits: alpha, beta, beta' and gamma. Post-translationally, phosphorylation affects the GDP/GTP exchange rate.

Its function is as follows. EF-1-beta and EF-1-delta stimulate the exchange of GDP bound to EF-1-alpha to GTP. In Drosophila melanogaster (Fruit fly), this protein is Probable elongation factor 1-beta.